A 536-amino-acid chain; its full sequence is Chaperonin GroEL 2 (536 aa).

Residues Thr29–Pro32, Asp86–Thr90, Gly413, Asn476–Ala478, and Asp492 contribute to the ATP site.

This sequence belongs to the chaperonin (HSP60) family. In terms of assembly, forms a cylinder of 14 subunits composed of two heptameric rings stacked back-to-back. Interacts with the co-chaperonin GroES.

It localises to the cytoplasm. The enzyme catalyses ATP + H2O + a folded polypeptide = ADP + phosphate + an unfolded polypeptide.. In terms of biological role, together with its co-chaperonin GroES, plays an essential role in assisting protein folding. The GroEL-GroES system forms a nano-cage that allows encapsulation of the non-native substrate proteins and provides a physical environment optimized to promote and accelerate protein folding. This is Chaperonin GroEL 2 from Moorella thermoacetica (strain ATCC 39073 / JCM 9320).